A 1189-amino-acid chain; its full sequence is Phosphatidylinositol 3,4,5-trisphosphate 5-phosphatase 1 (1189 aa).

In terms of domain architecture, SH2 spans 5–101 (WNHGNITRSK…GLVTHLQYPV (97 aa)). Residues 103-117 (LEEEDTGDDPEEDTV) are compositionally biased toward acidic residues. The disordered stretch occupies residues 103–132 (LEEEDTGDDPEEDTVESVVSPPELPPRNIP). Positions 124–129 (PELPPR) match the SH3-binding 1 motif. The residue at position 243 (S243) is a Phosphoserine. The interval 870–906 (TERDESSGPKTLKSLTSHDPMKQWEVTSRAPPCSGSS) is disordered. The NPXY motif 1 motif lies at 912-915 (NPNY). Y915 carries the phosphotyrosine modification. The interval 922–1189 (GPPMPLHVKQ…PGPLGRTAMQ (268 aa)) is disordered. Residues 931-943 (QTLSPDQQPTAWS) show a composition bias toward polar residues. A Phosphoserine modification is found at S934. The residue at position 944 (Y944) is a Phosphotyrosine. S960 is subject to Phosphoserine. Over residues 961–971 (PPTPPGQPPIS) the composition is skewed to pro residues. The residue at position 963 (T963) is a Phosphothreonine. An SH3-binding 2 motif is present at residues 969-974 (PISPKK). S971 carries the phosphoserine modification. An interaction with DAB2 region spans residues 1016–1030 (MFENPLYGSLSSFPK). An NPXY motif 2 motif is present at residues 1019–1022 (NPLY). Y1022 carries the post-translational modification Phosphotyrosine. Over residues 1033–1047 (PRKDQESPKMPRKEP) the composition is skewed to basic and acidic residues. The short motif at 1040–1051 (PKMPRKEPPPCP) is the SH3-binding 3 element. Positions 1134–1145 (PPTPTPRPPLPV) are enriched in pro residues. The segment covering 1157 to 1177 (KGRDYRDNTELPHHGKHRPEE) has biased composition (basic and acidic residues).

This sequence belongs to the inositol 1,4,5-trisphosphate 5-phosphatase family. In terms of assembly, interacts with tyrosine phosphorylated form of SHC1. Interacts with tyrosine phosphorylated form of DOK1. Interacts with tyrosine phosphorylated form of DOK3. Interacts with tyrosine phosphorylated form of SLAMF1/CD150. Interacts with PTPN11 in response to IL-3. Interacts with receptor EPOR. Interacts with receptors MS4A2/FCER1B and FCER1G. Interacts with receptors FCGR2B and FCGR3. Interacts with receptor FCGR2A, leading to regulate gene expression during the phagocytic process. Interacts with GRB2. Interacts with PLCG1. Interacts with tyrosine kinases SRC and TEC. Interacts with c-Met/MET. Interacts with MILR1 (tyrosine-phosphorylated). Can weakly interact (via NPXY motif 2) with DAB2 (via PID domain); the interaction is impaired by tyrosine phosphorylation of the NPXY motif. Interacts with FCRL3 and FCRL6 (tyrosine phosphorylated form). Interacts (via SH2 domain) with tyrosine phosphorylated KLRC1 (via ITIM). Interacts with MPL/TPOR. Tyrosine phosphorylated by the members of the SRC family after exposure to a diverse array of extracellular stimuli such as cytokines, growth factors, antibodies, chemokines, integrin ligands and hypertonic and oxidative stress. Phosphorylated upon IgG receptor FCGR2B-binding. In terms of tissue distribution, specifically expressed in immune and hematopoietic cells. Expressed in bone marrow and blood cells. Levels vary considerably within this compartment. Present in at least 74% of immature CD34+ cells, whereas within the more mature population of CD33+ cells, it is present in only 10% of cells. Present in the majority of T-cells, while it is present in a minority of B-cells (at protein level).

The protein localises to the cytoplasm. It localises to the cell membrane. Its subcellular location is the membrane raft. It is found in the cytoskeleton. The protein resides in the membrane. It catalyses the reaction a 1,2-diacyl-sn-glycero-3-phospho-(1D-myo-inositol-3,4,5-trisphosphate) + H2O = a 1,2-diacyl-sn-glycero-3-phospho-(1D-myo-inositol-3,4-bisphosphate) + phosphate. It carries out the reaction 1D-myo-inositol 1,3,4,5-tetrakisphosphate + H2O = 1D-myo-inositol 1,3,4-trisphosphate + phosphate. The enzyme catalyses a 1,2-diacyl-sn-glycero-3-phospho-(1D-myo-inositol-4,5-bisphosphate) + H2O = a 1,2-diacyl-sn-glycero-3-phospho-(1D-myo-inositol 4-phosphate) + phosphate. With respect to regulation, activated upon translocation to the sites of synthesis of PtdIns(3,4,5)P3 in the membrane. Phosphatidylinositol (PtdIns) phosphatase that specifically hydrolyzes the 5-phosphate of phosphatidylinositol-3,4,5-trisphosphate (PtdIns(3,4,5)P3) to produce PtdIns(3,4)P2, thereby negatively regulating the PI3K (phosphoinositide 3-kinase) pathways. Able also to hydrolyzes the 5-phosphate of phosphatidylinositol-4,5-bisphosphate (PtdIns(4,5)P3) and inositol 1,3,4,5-tetrakisphosphate. Acts as a negative regulator of B-cell antigen receptor signaling. Mediates signaling from the FC-gamma-RIIB receptor (FCGR2B), playing a central role in terminating signal transduction from activating immune/hematopoietic cell receptor systems. Acts as a negative regulator of myeloid cell proliferation/survival and chemotaxis, mast cell degranulation, immune cells homeostasis, integrin alpha-IIb/beta-3 signaling in platelets and JNK signaling in B-cells. Regulates proliferation of osteoclast precursors, macrophage programming, phagocytosis and activation and is required for endotoxin tolerance. Involved in the control of cell-cell junctions, CD32a signaling in neutrophils and modulation of EGF-induced phospholipase C activity. Key regulator of neutrophil migration, by governing the formation of the leading edge and polarization required for chemotaxis. Modulates FCGR3/CD16-mediated cytotoxicity in NK cells. Mediates the activin/TGF-beta-induced apoptosis through its Smad-dependent expression. This is Phosphatidylinositol 3,4,5-trisphosphate 5-phosphatase 1 (INPP5D) from Homo sapiens (Human).